Reading from the N-terminus, the 344-residue chain is N-acetyl-gamma-glutamyl-phosphate reductase (344 aa).

Residue Cys-150 is part of the active site.

Belongs to the NAGSA dehydrogenase family. Type 1 subfamily.

Its subcellular location is the cytoplasm. The enzyme catalyses N-acetyl-L-glutamate 5-semialdehyde + phosphate + NADP(+) = N-acetyl-L-glutamyl 5-phosphate + NADPH + H(+). Its pathway is amino-acid biosynthesis; L-arginine biosynthesis; N(2)-acetyl-L-ornithine from L-glutamate: step 3/4. Functionally, catalyzes the NADPH-dependent reduction of N-acetyl-5-glutamyl phosphate to yield N-acetyl-L-glutamate 5-semialdehyde. The sequence is that of N-acetyl-gamma-glutamyl-phosphate reductase from Pseudomonas putida (strain W619).